Here is a 350-residue protein sequence, read N- to C-terminus: Olfactory receptor 52I2 (350 aa).

At 1–55 (MCQQILRDCILLIHHLCINRKKVSLVMLGPAYNHTMETPASFLLVGIPGLQSSHL) the chain is on the extracellular side. N33 carries N-linked (GlcNAc...) asparagine glycosylation. Residues 56–76 (WLAISLSAMYIIALLGNTIIV) form a helical membrane-spanning segment. Over 77-84 (TAIWMDST) the chain is Cytoplasmic. A helical membrane pass occupies residues 85-105 (RHEPMYCFLCVLAAVDIVMAS). Over 106–129 (SVVPKMVSIFCSGDSSISFSACFT) the chain is Extracellular. C127 and C219 are disulfide-bonded. The chain crosses the membrane as a helical span at residues 130–150 (QMFFVHLATAVETGLLLTMAF). Over 151-169 (DRYVAICKPLHYKRILTPQ) the chain is Cytoplasmic. Residues 170–190 (VMLGMSMAITIRAIIAITPLS) form a helical membrane-spanning segment. At 191–226 (WMVSHLPFCGSNVVVHSYCEHIALARLACADPVPSS) the chain is on the extracellular side. The chain crosses the membrane as a helical span at residues 227–247 (LYSLIGSSLMVGSDVAFIAAS). Topologically, residues 248-267 (YILILKAVFGLSSKTAQLKA) are cytoplasmic. The chain crosses the membrane as a helical span at residues 268 to 288 (LSTCGSHVGVMALYYLPGMAS). Residues 289-304 (IYAAWLGQDVVPLHTQ) lie on the Extracellular side of the membrane. The chain crosses the membrane as a helical span at residues 305-325 (VLLADLYVIIPATLNPIIYGM). Residues 326–350 (RTKQLRERIWSYLMHVLFDHSNLGS) lie on the Cytoplasmic side of the membrane.

The protein belongs to the G-protein coupled receptor 1 family.

It is found in the cell membrane. Odorant receptor. This chain is Olfactory receptor 52I2 (OR52I2), found in Homo sapiens (Human).